We begin with the raw amino-acid sequence, 882 residues long: Translation initiation factor IF-2 (882 aa).

2 disordered regions span residues 95–176 (PSVT…ASSL) and 229–289 (EHAR…SALQ). Over residues 116–133 (TKNTFSQESLNKTSPQKS) the composition is skewed to polar residues. Basic and acidic residues-rich tracts occupy residues 137–172 (KAIEKAKIESPKKERHSLKEKQKKEAQSEKARREAE) and 229–246 (EHARAAEDENDAKVEGDR). The span at 247 to 262 (RSRHRGTKTTKQKKTN) shows a compositional bias: basic residues. The segment covering 263 to 276 (KLSESKTDREEARA) has biased composition (basic and acidic residues). Residues 382-551 (HRAPVVTIMG…LLQAEVLELK (170 aa)) enclose the tr-type G domain. The interval 391 to 398 (GHVDHGKT) is G1. A GTP-binding site is contributed by 391–398 (GHVDHGKT). Residues 416–420 (GITQH) are G2. The interval 437–440 (DTPG) is G3. GTP-binding positions include 437-441 (DTPGH) and 491-494 (NKID). Residues 491–494 (NKID) are G4. Residues 527–529 (SAK) form a G5 region.

It belongs to the TRAFAC class translation factor GTPase superfamily. Classic translation factor GTPase family. IF-2 subfamily.

Its subcellular location is the cytoplasm. Functionally, one of the essential components for the initiation of protein synthesis. Protects formylmethionyl-tRNA from spontaneous hydrolysis and promotes its binding to the 30S ribosomal subunits. Also involved in the hydrolysis of GTP during the formation of the 70S ribosomal complex. The chain is Translation initiation factor IF-2 from Hamiltonella defensa subsp. Acyrthosiphon pisum (strain 5AT).